A 247-amino-acid polypeptide reads, in one-letter code: Carboxy-S-adenosyl-L-methionine synthase (247 aa).

S-adenosyl-L-methionine-binding positions include tyrosine 40, 65–67 (GAS), 90–91 (DN), 122–123 (DI), asparagine 137, and arginine 204.

The protein belongs to the class I-like SAM-binding methyltransferase superfamily. Cx-SAM synthase family. As to quaternary structure, homodimer.

It carries out the reaction prephenate + S-adenosyl-L-methionine = carboxy-S-adenosyl-L-methionine + 3-phenylpyruvate + H2O. Its function is as follows. Catalyzes the conversion of S-adenosyl-L-methionine (SAM) to carboxy-S-adenosyl-L-methionine (Cx-SAM). The polypeptide is Carboxy-S-adenosyl-L-methionine synthase (Pseudomonas putida (strain ATCC 700007 / DSM 6899 / JCM 31910 / BCRC 17059 / LMG 24140 / F1)).